The chain runs to 240 residues: Tetrahydromethanopterin S-methyltransferase subunit A (240 aa).

Over 1–218 (MADKREPAPG…KFHSGVHAGK (218 aa)) the chain is Cytoplasmic. His-85 lines the 5-hydroxybenzimidazolylcob(I)amide pocket. A helical transmembrane segment spans residues 219-239 (VEGAMIGLTITISLLGLLLLG). A topological domain (extracellular) is located at residue Arg-240.

This sequence belongs to the MtrA family. In terms of assembly, the complex is composed of 8 subunits; MtrA, MtrB, MtrC, MtrD, MtrE, MtrF, MtrG and MtrH. It depends on 5-hydroxybenzimidazolylcob(I)amide as a cofactor.

The protein localises to the cell membrane. The enzyme catalyses 5-methyl-5,6,7,8-tetrahydromethanopterin + coenzyme M + 2 Na(+)(in) = 5,6,7,8-tetrahydromethanopterin + methyl-coenzyme M + 2 Na(+)(out). Its pathway is one-carbon metabolism; methanogenesis from CO(2); methyl-coenzyme M from 5,10-methylene-5,6,7,8-tetrahydromethanopterin: step 2/2. Functionally, part of a complex that catalyzes the formation of methyl-coenzyme M and tetrahydromethanopterin from coenzyme M and methyl-tetrahydromethanopterin. This is an energy-conserving, sodium-ion translocating step. The polypeptide is Tetrahydromethanopterin S-methyltransferase subunit A (Methanosarcina mazei (strain ATCC BAA-159 / DSM 3647 / Goe1 / Go1 / JCM 11833 / OCM 88) (Methanosarcina frisia)).